A 298-amino-acid chain; its full sequence is tRNA(Met) cytidine acetate ligase (298 aa).

Residues 6 to 19 (IAEY…HIYQ), Gly100, Asn157, and Arg182 contribute to the ATP site.

The protein belongs to the TmcAL family.

The protein resides in the cytoplasm. It catalyses the reaction cytidine(34) in elongator tRNA(Met) + acetate + ATP = N(4)-acetylcytidine(34) in elongator tRNA(Met) + AMP + diphosphate. Catalyzes the formation of N(4)-acetylcytidine (ac(4)C) at the wobble position of elongator tRNA(Met), using acetate and ATP as substrates. First activates an acetate ion to form acetyladenylate (Ac-AMP) and then transfers the acetyl group to tRNA to form ac(4)C34. The chain is tRNA(Met) cytidine acetate ligase from Mycoplasmopsis pulmonis (strain UAB CTIP) (Mycoplasma pulmonis).